A 496-amino-acid chain; its full sequence is Maintenance of mitochondrial morphology protein 1 (496 aa).

Topologically, residues 1–22 are lumenal; it reads MSSQLNDPTPIPAQSSLSFTQG. Residues 23-43 form a helical membrane-spanning segment; it reads FLLGQLSVVLLIAAFIKFFIF. Residues 44–496 lie on the Cytoplasmic side of the membrane; sequence GEAPPPPSRG…SLPGGGVTTT (453 aa). 4 disordered regions span residues 50 to 96, 276 to 331, 395 to 433, and 449 to 496; these read PSRG…VPSS, PLDT…KSNV, GRTG…SREP, and DLAS…VTTT. Residues 54-64 are compositionally biased toward basic residues; that stretch reads LSHRSATHRRS. Residues 65 to 74 are compositionally biased toward polar residues; it reads NSIYSSTQHD. The segment covering 75-84 has biased composition (basic and acidic residues); sequence GNTRTLREKP. Residues 85 to 96 are compositionally biased toward polar residues; the sequence is SNSNVLRPVPSS. The 258-residue stretch at 131 to 388 folds into the SMP-LTD domain; sequence QPESLDWFNV…EPRVQVVGLP (258 aa). Over residues 276 to 287 the composition is skewed to pro residues; that stretch reads PLDTPSHSPSPP. A compositionally biased stretch (polar residues) spans 407-418; it reads TGSNAPRSSTAA. Basic and acidic residues-rich tracts occupy residues 424–433 and 462–474; these read AHHEDSSREP and GDLR…REES.

It belongs to the MMM1 family. Homodimer. Component of the ER-mitochondria encounter structure (ERMES) or MDM complex, composed of mmm1, mdm10, mdm12 and mdm34. A mmm1 homodimer associates with one molecule of mdm12 on each side in a pairwise head-to-tail manner, and the SMP-LTD domains of mmm1 and mdm12 generate a continuous hydrophobic tunnel for phospholipid trafficking.

It localises to the endoplasmic reticulum membrane. In terms of biological role, component of the ERMES/MDM complex, which serves as a molecular tether to connect the endoplasmic reticulum (ER) and mitochondria. Components of this complex are involved in the control of mitochondrial shape and protein biogenesis, and function in nonvesicular lipid trafficking between the ER and mitochondria. The mdm12-mmm1 subcomplex functions in the major beta-barrel assembly pathway that is responsible for biogenesis of all outer membrane beta-barrel proteins, and acts in a late step after the SAM complex. The mdm10-mdm12-mmm1 subcomplex further acts in the TOM40-specific pathway after the action of the mdm12-mmm1 complex. Essential for establishing and maintaining the structure of mitochondria and maintenance of mtDNA nucleoids. The sequence is that of Maintenance of mitochondrial morphology protein 1 from Neosartorya fischeri (strain ATCC 1020 / DSM 3700 / CBS 544.65 / FGSC A1164 / JCM 1740 / NRRL 181 / WB 181) (Aspergillus fischerianus).